Reading from the N-terminus, the 269-residue chain is 3-methyl-2-oxobutanoate hydroxymethyltransferase (269 aa).

Residues D51 and D90 each coordinate Mg(2+). 3-methyl-2-oxobutanoate-binding positions include 51–52 (DS), D90, and K120. E122 contacts Mg(2+). The active-site Proton acceptor is E187.

Belongs to the PanB family. In terms of assembly, homodecamer; pentamer of dimers. Mg(2+) serves as cofactor.

It localises to the cytoplasm. It catalyses the reaction 3-methyl-2-oxobutanoate + (6R)-5,10-methylene-5,6,7,8-tetrahydrofolate + H2O = 2-dehydropantoate + (6S)-5,6,7,8-tetrahydrofolate. It participates in cofactor biosynthesis; (R)-pantothenate biosynthesis; (R)-pantoate from 3-methyl-2-oxobutanoate: step 1/2. Catalyzes the reversible reaction in which hydroxymethyl group from 5,10-methylenetetrahydrofolate is transferred onto alpha-ketoisovalerate to form ketopantoate. The protein is 3-methyl-2-oxobutanoate hydroxymethyltransferase of Tropheryma whipplei (strain TW08/27) (Whipple's bacillus).